The sequence spans 179 residues: Large ribosomal subunit protein uL5 (179 aa).

The protein belongs to the universal ribosomal protein uL5 family. As to quaternary structure, part of the 50S ribosomal subunit; part of the 5S rRNA/L5/L18/L25 subcomplex. Contacts the 5S rRNA and the P site tRNA. Forms a bridge to the 30S subunit in the 70S ribosome.

Its function is as follows. This is one of the proteins that bind and probably mediate the attachment of the 5S RNA into the large ribosomal subunit, where it forms part of the central protuberance. In the 70S ribosome it contacts protein S13 of the 30S subunit (bridge B1b), connecting the 2 subunits; this bridge is implicated in subunit movement. Contacts the P site tRNA; the 5S rRNA and some of its associated proteins might help stabilize positioning of ribosome-bound tRNAs. This chain is Large ribosomal subunit protein uL5, found in Tolumonas auensis (strain DSM 9187 / NBRC 110442 / TA 4).